The sequence spans 442 residues: Putative aminohydrolase SsnA (442 aa).

Zn(2+)-binding residues include His62, His64, His227, and Asp312.

It belongs to the metallo-dependent hydrolases superfamily. ATZ/TRZ family.

The polypeptide is Putative aminohydrolase SsnA (ssnA) (Escherichia coli (strain K12)).